Consider the following 418-residue polypeptide: Adenylosuccinate synthetase 2 (418 aa).

GTP-binding positions include 12-18 (GDEGKGR) and 40-42 (GHT). Residue Asp-13 is the Proton acceptor of the active site. The Mg(2+) site is built by Asp-13 and Gly-40. IMP-binding positions include 13–16 (DEGK), 38–41 (NAGH), Thr-127, Lys-141, Thr-239, and Arg-301. His-41 acts as the Proton donor in catalysis. 297 to 303 (AVTGRPR) serves as a coordination point for substrate. Residues Arg-303, 329–331 (KID), and 407–409 (SVG) contribute to the GTP site.

It belongs to the adenylosuccinate synthetase family. Homodimer. The cofactor is Mg(2+).

It localises to the cytoplasm. The enzyme catalyses IMP + L-aspartate + GTP = N(6)-(1,2-dicarboxyethyl)-AMP + GDP + phosphate + 2 H(+). It functions in the pathway purine metabolism; AMP biosynthesis via de novo pathway; AMP from IMP: step 1/2. Functionally, plays an important role in the de novo pathway of purine nucleotide biosynthesis. Catalyzes the first committed step in the biosynthesis of AMP from IMP. The polypeptide is Adenylosuccinate synthetase 2 (Pseudoalteromonas translucida (strain TAC 125)).